The sequence spans 232 residues: Large ribosomal subunit protein uL1 (232 aa).

Belongs to the universal ribosomal protein uL1 family. In terms of assembly, part of the 50S ribosomal subunit.

In terms of biological role, binds directly to 23S rRNA. The L1 stalk is quite mobile in the ribosome, and is involved in E site tRNA release. Functionally, protein L1 is also a translational repressor protein, it controls the translation of the L11 operon by binding to its mRNA. In Burkholderia cenocepacia (strain HI2424), this protein is Large ribosomal subunit protein uL1.